A 381-amino-acid polypeptide reads, in one-letter code: Probable G-protein coupled receptor 34 (381 aa).

Topologically, residues 1 to 61 are extracellular; the sequence is MRSHTITMTT…LLSTVLTTSY (61 aa). Residues Asn28, Asn36, and Asn42 are each glycosylated (N-linked (GlcNAc...) asparagine). A helical transmembrane segment spans residues 62–82; that stretch reads SVIFIVGLVGNIIALYVFLGI. Topologically, residues 83 to 88 are cytoplasmic; the sequence is HRKRNS. The helical transmembrane segment at 89 to 109 threads the bilayer; sequence IQIYLLNVAIADLLLIFCLPF. The Extracellular portion of the chain corresponds to 110–128; the sequence is RIMYHINQNKWTLGVILCK. Residues Cys127 and Cys204 are joined by a disulfide bond. A helical transmembrane segment spans residues 129–149; that stretch reads VVGTLFYMNMYISIILLGFIS. The Cytoplasmic segment spans residues 150 to 171; sequence LDRYIKINRSIQQRKAITTKQS. Residues 172–192 traverse the membrane as a helical segment; the sequence is IYVCCIVWMLALGGFLTMIIL. The Extracellular segment spans residues 193-216; that stretch reads TLKKGGHNSTMCFHYRDKHNAKGE. Asn200 carries an N-linked (GlcNAc...) asparagine glycan. A helical membrane pass occupies residues 217 to 237; that stretch reads AIFNFILVVMFWLIFLLIILS. Residues 238 to 269 are Cytoplasmic-facing; it reads YIKIGKNLLRISKRRSKFPNSGKYATTARNSF. Residues 270–290 form a helical membrane-spanning segment; the sequence is IVLIIFTICFVPYHAFRFIYI. At 291–310 the chain is on the extracellular side; it reads SSQLNVSSCYWKEIVHKTNE. An N-linked (GlcNAc...) asparagine glycan is attached at Asn295. A helical transmembrane segment spans residues 311–331; that stretch reads IMLVLSSFNSCLDPVMYFLMS. Topologically, residues 332-381 are cytoplasmic; it reads SNIRKIMCQLLFRRFQGEPSRSESTSEFKPGYSLHDTSVAVKIQSSSKST.

The protein belongs to the G-protein coupled receptor 1 family.

It localises to the cell membrane. Its function is as follows. G-protein-coupled receptor of lysophosphatidylserine (LysoPS) that plays different roles in immune response. Acts a damage-sensing receptor that triggers tissue repair upon recognition of dying neutrophils. Mechanistically, apoptotic neutrophils release lysophosphatydilserine that are recognized by type 3 innate lymphoid cells (ILC3s) via GPR34, which activates downstream PI3K-AKT and RAS-ERK signaling pathways leading to STAT3 activation and IL-22 production. Plays an important role in microglial function, controlling morphology and phagocytosis. In Gorilla gorilla gorilla (Western lowland gorilla), this protein is Probable G-protein coupled receptor 34 (GPR34).